The chain runs to 216 residues: ATP phosphoribosyltransferase (216 aa).

The protein belongs to the ATP phosphoribosyltransferase family. Short subfamily. Heteromultimer composed of HisG and HisZ subunits.

Its subcellular location is the cytoplasm. It catalyses the reaction 1-(5-phospho-beta-D-ribosyl)-ATP + diphosphate = 5-phospho-alpha-D-ribose 1-diphosphate + ATP. It functions in the pathway amino-acid biosynthesis; L-histidine biosynthesis; L-histidine from 5-phospho-alpha-D-ribose 1-diphosphate: step 1/9. Functionally, catalyzes the condensation of ATP and 5-phosphoribose 1-diphosphate to form N'-(5'-phosphoribosyl)-ATP (PR-ATP). Has a crucial role in the pathway because the rate of histidine biosynthesis seems to be controlled primarily by regulation of HisG enzymatic activity. The chain is ATP phosphoribosyltransferase from Nitrosomonas europaea (strain ATCC 19718 / CIP 103999 / KCTC 2705 / NBRC 14298).